Here is a 95-residue protein sequence, read N- to C-terminus: Protein TusB (95 aa).

This sequence belongs to the DsrH/TusB family. In terms of assembly, heterohexamer, formed by a dimer of trimers. The hexameric TusBCD complex contains 2 copies each of TusB, TusC and TusD. The TusBCD complex interacts with TusE.

The protein resides in the cytoplasm. Part of a sulfur-relay system required for 2-thiolation of 5-methylaminomethyl-2-thiouridine (mnm(5)s(2)U) at tRNA wobble positions. This Escherichia coli O139:H28 (strain E24377A / ETEC) protein is Protein TusB.